Consider the following 344-residue polypeptide: MIKNITGIAMSGGVDSTATAILQKQKGPVLGFFMKLNQPDYETQRDRVSQIAQKLDIKLEIIDLTEEFQEYVLKYFSASYFKGLTPNPCIICNKEIKFGLFQQAILRQGVERIATGHYAQIHKTAAGYQLHKGVDPHKDQSYFLSRLSQEQLAHSIFPLGGMHKGAIYDLVEAHGFHDFRGTESQDVCFLEQDNVVDFLEQTAEFSASSGNIVMNDGKILGKHKGLHRYTVGQRRGLGISYPVPLYVINLDVKNNNVIVGENEQLFHKTMAISDIHWISQPEREDLLHASVHIRSTHKGAQASVILKENNRASVIFDEPQRAITPGQFATIYKDTQVLGSGVIL.

Residues 9 to 16 and Met-34 contribute to the ATP site; that span reads AMSGGVDS. The active-site Nucleophile is the Cys-92. Cys-92 and Cys-188 form a disulfide bridge. Residue Gly-116 participates in ATP binding. The interaction with tRNA stretch occupies residues 138 to 140; that stretch reads KDQ. Cys-188 serves as the catalytic Cysteine persulfide intermediate.

Belongs to the MnmA/TRMU family.

It is found in the cytoplasm. The enzyme catalyses S-sulfanyl-L-cysteinyl-[protein] + uridine(34) in tRNA + AH2 + ATP = 2-thiouridine(34) in tRNA + L-cysteinyl-[protein] + A + AMP + diphosphate + H(+). Functionally, catalyzes the 2-thiolation of uridine at the wobble position (U34) of tRNA, leading to the formation of s(2)U34. The chain is tRNA-specific 2-thiouridylase MnmA from Desulfotalea psychrophila (strain LSv54 / DSM 12343).